The primary structure comprises 500 residues: Na(+)/H(+) antiporter NhaB (500 aa).

12 consecutive transmembrane segments (helical) span residues 28-50, 68-88, 98-118, 121-141, 145-165, 205-225, 244-264, 311-331, 350-370, 394-414, 449-469, and 477-497; these read FLLLNPLLLWLAGPVTSAWVLVG, GGLLVLEALLLGLATPEALYA, LLLMFMVAGIYFMKDLLLLLF, LLLGVRSKTLLSLLFCLLAAL, FLDALTVTAVVISVAVAFFAV, LLMHAAVGTALGGVCTLVGEP, QVAPVSMPVLAAGLLTCVLLE, VLIVGLALHVAEVGLIGLLVI, FQEALPFTALLVVFFAVVAVI, MLFIANGLLSAISDNVFVATI, VATPNGQAAFLFLLTSSIAPL, and MVWMALPYTLVMGGLGWWAVS.

It belongs to the NhaB Na(+)/H(+) (TC 2.A.34) antiporter family.

Its subcellular location is the cell inner membrane. The catalysed reaction is 2 Na(+)(in) + 3 H(+)(out) = 2 Na(+)(out) + 3 H(+)(in). Its function is as follows. Na(+)/H(+) antiporter that extrudes sodium in exchange for external protons. This chain is Na(+)/H(+) antiporter NhaB, found in Pseudomonas aeruginosa (strain LESB58).